The following is a 562-amino-acid chain: NAD-dependent malic enzyme (562 aa).

Tyrosine 101 functions as the Proton donor in the catalytic mechanism. Residue arginine 154 participates in NAD(+) binding. Lysine 172 serves as the catalytic Proton acceptor. A divalent metal cation is bound by residues glutamate 243, aspartate 244, and aspartate 267. Residues aspartate 267 and asparagine 415 each coordinate NAD(+).

The protein belongs to the malic enzymes family. As to quaternary structure, homotetramer. Mg(2+) is required as a cofactor. Mn(2+) serves as cofactor.

It carries out the reaction (S)-malate + NAD(+) = pyruvate + CO2 + NADH. It catalyses the reaction oxaloacetate + H(+) = pyruvate + CO2. In Shewanella baltica (strain OS223), this protein is NAD-dependent malic enzyme.